A 621-amino-acid chain; its full sequence is tRNA uridine 5-carboxymethylaminomethyl modification enzyme MnmG (621 aa).

8 to 13 serves as a coordination point for FAD; the sequence is GAGHAG. Residue 269–283 coordinates NAD(+); sequence GPRYCPSVEDKIFRF.

Belongs to the MnmG family. Homodimer. Heterotetramer of two MnmE and two MnmG subunits. Requires FAD as cofactor.

The protein localises to the cytoplasm. Functionally, NAD-binding protein involved in the addition of a carboxymethylaminomethyl (cmnm) group at the wobble position (U34) of certain tRNAs, forming tRNA-cmnm(5)s(2)U34. The sequence is that of tRNA uridine 5-carboxymethylaminomethyl modification enzyme MnmG from Chlorobium phaeobacteroides (strain DSM 266 / SMG 266 / 2430).